Here is a 500-residue protein sequence, read N- to C-terminus: Coiled-coil domain-containing protein 85A (500 aa).

Positions 1–23 (MSKAAGGSAPAAESCPSAPAGAS) are enriched in low complexity. The interval 1-30 (MSKAAGGSAPAAESCPSAPAGASTPTGVDD) is disordered. Coiled coils occupy residues 38–104 (ELLQ…RDLC) and 132–171 (MHKE…DEEK). Disordered regions lie at residues 200 to 405 (RDVG…SGMN) and 426 to 465 (NRML…QPEP). Positions 204-215 (DGSSTSSTGSTD) are enriched in low complexity. A compositionally biased stretch (basic and acidic residues) spans 231–254 (HLQKPRSEGSPEHTKHRSTSPEHL). Residues 372-381 (GSGGSGGGSR) are compositionally biased toward gly residues. The span at 383-395 (GTLRRPAQEDSSS) shows a compositional bias: basic and acidic residues. Residues 404–429 (MNESTLSYVRQLEARVRQLEEENRML) adopt a coiled-coil conformation. A compositionally biased stretch (polar residues) spans 434 to 463 (FRLSSGADGNNSSLNSPASFSGHTTPSQQP). Asymmetric dimethylarginine is present on Arg488.

Belongs to the CCDC85 family. As to quaternary structure, may interact with ARVCF; CTNND1; CTNND2 and PKP4.

Its subcellular location is the cell junction. It localises to the adherens junction. Functionally, may play a role in cell-cell adhesion and epithelium development through its interaction with proteins of the beta-catenin family. The chain is Coiled-coil domain-containing protein 85A (Ccdc85a) from Mus musculus (Mouse).